A 257-amino-acid chain; its full sequence is MAWSAAQYTKFEDERTRPARDLLAQVTELPDGPAFDLGCGPGNSTELILNRFRDNPLTGIDSDEDMLSAARTRLPELRFEKADLASWVPPAESALFFANAVFQWLPEHIVLFERLILALAPGGTLAVQMPDNLDEPTHVLMEETAEESAFASAFAGRAARRKSLPSPANYVERLTAKDVRIDVWHTVYYHQLANANAIVEWVKGTGLRPYLDALPAARRAGYLAAYADKIRKAYPTMKDGRVLLRFPRLFIVATRNR.

This sequence belongs to the methyltransferase superfamily. Tam family.

The protein localises to the cytoplasm. It catalyses the reaction trans-aconitate + S-adenosyl-L-methionine = (E)-3-(methoxycarbonyl)pent-2-enedioate + S-adenosyl-L-homocysteine. Catalyzes the S-adenosylmethionine monomethyl esterification of trans-aconitate. In Sinorhizobium medicae (strain WSM419) (Ensifer medicae), this protein is Trans-aconitate 2-methyltransferase.